The following is a 360-amino-acid chain: Photosystem II protein D1 (360 aa).

Helical transmembrane passes span 30-47, 119-134, and 143-157; these read YVGW…AAAI, HFLI…QWEL, and WICV…AAFA. H119 serves as a coordination point for chlorophyll a. A pheophytin a-binding site is contributed by W127. The [CaMn4O5] cluster site is built by D171 and E190. A helical transmembrane segment spans residues 198-219; sequence FHMAGVAGMFGGSLFSAMHGSL. H199 is a binding site for chlorophyll a. Residues H216 and 265 to 266 contribute to the a quinone site; that span reads SF. Position 216 (H216) interacts with Fe cation. H273 contributes to the Fe cation binding site. The chain crosses the membrane as a helical span at residues 275-289; the sequence is FLAIFPVVCVWLTSM. Positions 333, 334, 343, and 345 each coordinate [CaMn4O5] cluster. Positions 346–360 are excised as a propeptide; that stretch reads AAESTSVALVAPSIG.

It belongs to the reaction center PufL/M/PsbA/D family. As to quaternary structure, PSII is composed of 1 copy each of membrane proteins PsbA, PsbB, PsbC, PsbD, PsbE, PsbF, PsbH, PsbI, PsbJ, PsbK, PsbL, PsbM, PsbT, PsbX, PsbY, Psb30/Ycf12, peripheral proteins PsbO, CyanoQ (PsbQ), PsbU, PsbV and a large number of cofactors. It forms dimeric complexes. The cofactor is The D1/D2 heterodimer binds P680, chlorophylls that are the primary electron donor of PSII, and subsequent electron acceptors. It shares a non-heme iron and each subunit binds pheophytin, quinone, additional chlorophylls, carotenoids and lipids. D1 provides most of the ligands for the Mn4-Ca-O5 cluster of the oxygen-evolving complex (OEC). There is also a Cl(-1) ion associated with D1 and D2, which is required for oxygen evolution. The PSII complex binds additional chlorophylls, carotenoids and specific lipids.. In terms of processing, tyr-162 forms a radical intermediate that is referred to as redox-active TyrZ, YZ or Y-Z. Post-translationally, C-terminally processed by CtpA; processing is essential to allow assembly of the oxygen-evolving complex and thus photosynthetic growth.

The protein localises to the cellular thylakoid membrane. The catalysed reaction is 2 a plastoquinone + 4 hnu + 2 H2O = 2 a plastoquinol + O2. Functionally, photosystem II (PSII) is a light-driven water:plastoquinone oxidoreductase that uses light energy to abstract electrons from H(2)O, generating O(2) and a proton gradient subsequently used for ATP formation. It consists of a core antenna complex that captures photons, and an electron transfer chain that converts photonic excitation into a charge separation. The D1/D2 (PsbA/PsbD) reaction center heterodimer binds P680, the primary electron donor of PSII as well as several subsequent electron acceptors. This chain is Photosystem II protein D1, found in Prochlorococcus marinus (strain SARG / CCMP1375 / SS120).